The sequence spans 361 residues: RuBisCO accumulation factor 1 (361 aa).

Residues 16-197 (NELAQELLRK…RKQIEQLLVD (182 aa)) are N-terminal alpha-helix. The C-terminal beta-sheet stretch occupies residues 221-347 (PRIVPVVGQL…VIILVRPRRI (127 aa)).

Belongs to the RAF family. As to quaternary structure, homodimer. Forms an RbcL(8)-Raf1(8) complex. Each Raf1 dimer clamps the exterior of an RbcL dimer, protecting it. The extreme C-terminus (residues 354-361) inserts into the catalytic pocket of RbcL where the Glu-361 forms a salt bridge with 'Lys-202'. This insertion probably contributes to the assembly of RbcL(8). Forms complexes of many stoichiometries with RbcL with and without RbcS. RbcX and Raf1 can bind simultaneously to RbcL.

Its subcellular location is the cytoplasm. Its function is as follows. A major RuBisCO chaperone. Acts after GroEL-GroES chaperonin to fold and/or assemble the large subunit of RuBisCO (ccbL, rbcL). Cooperates with RbcX in RbcL folding, plays the major role in assembly of dimers into RbcL(8)-Raf1(8) intermediate complexes. RbcS replaces Raf1, leading to holoenzyme formation. Functionally, in vitro acts as an antagonist to CcmM35, suggesting it might regulate RuBisCO condensation and decondensation. The chain is RuBisCO accumulation factor 1 from Nostoc sp. (strain PCC 7120 / SAG 25.82 / UTEX 2576).